Here is a 428-residue protein sequence, read N- to C-terminus: Serine--tRNA ligase (428 aa).

231 to 233 (TSE) contacts L-serine. ATP contacts are provided by residues 262–264 (RRE) and Val278. Glu285 provides a ligand contact to L-serine. Residue 349–352 (ELTS) participates in ATP binding. Thr384 is a binding site for L-serine.

Belongs to the class-II aminoacyl-tRNA synthetase family. Type-1 seryl-tRNA synthetase subfamily. As to quaternary structure, homodimer. The tRNA molecule binds across the dimer.

It is found in the cytoplasm. The enzyme catalyses tRNA(Ser) + L-serine + ATP = L-seryl-tRNA(Ser) + AMP + diphosphate + H(+). The catalysed reaction is tRNA(Sec) + L-serine + ATP = L-seryl-tRNA(Sec) + AMP + diphosphate + H(+). The protein operates within aminoacyl-tRNA biosynthesis; selenocysteinyl-tRNA(Sec) biosynthesis; L-seryl-tRNA(Sec) from L-serine and tRNA(Sec): step 1/1. Functionally, catalyzes the attachment of serine to tRNA(Ser). Is also able to aminoacylate tRNA(Sec) with serine, to form the misacylated tRNA L-seryl-tRNA(Sec), which will be further converted into selenocysteinyl-tRNA(Sec). This Bifidobacterium animalis subsp. lactis (strain AD011) protein is Serine--tRNA ligase.